The primary structure comprises 115 residues: Anamorsin homolog 1 (115 aa).

Residues 30-115 (VKEATKGEDC…KVKLNLTDDI (86 aa)) form a disordered region. [2Fe-2S] cluster is bound by residues C39, C46, C49, and C51. Positions 39–51 (CTTRRRACKNCTC) are fe-S binding site A. 4 residues coordinate [4Fe-4S] cluster: C77, C80, C88, and C91. 2 short sequence motifs (cx2C motif) span residues 77-80 (CGNC) and 88-91 (CATC). A fe-S binding site B region spans residues 77 to 91 (CGNCAKGDAFRCATC).

Belongs to the anamorsin family. Monomer. The cofactor is [2Fe-2S] cluster. Requires [4Fe-4S] cluster as cofactor.

It localises to the cytoplasm. The protein localises to the mitochondrion intermembrane space. Its function is as follows. Component of the cytosolic iron-sulfur (Fe-S) protein assembly (CIA) machinery. Required for the maturation of extramitochondrial Fe-S proteins. Part of an electron transfer chain functioning in an early step of cytosolic Fe-S biogenesis, facilitating the de novo assembly of a [4Fe-4S] cluster on the cytosolic Fe-S scaffold complex. Electrons are transferred from NADPH via a FAD- and FMN-containing diflavin oxidoreductase. Together with the diflavin oxidoreductase, also required for the assembly of the diferric tyrosyl radical cofactor of ribonucleotide reductase (RNR), probably by providing electrons for reduction during radical cofactor maturation in the catalytic small subunit. This chain is Anamorsin homolog 1, found in Trypanosoma cruzi (strain CL Brener).